The primary structure comprises 92 residues: RQC P-site tRNA stabilizing factor (92 aa).

Residues 5–65 (MRLDKYLKVS…GPKIVTAKIE (61 aa)) enclose the S4 RNA-binding domain.

It belongs to the RqcP family. In terms of assembly, associates with stalled 50S ribosomal subunits. Binds to RqcH, 23S rRNA and the P-site tRNA. Does not require RqcH for association with 50S subunits.

In terms of biological role, key component of the ribosome quality control system (RQC), a ribosome-associated complex that mediates the extraction of incompletely synthesized nascent chains from stalled ribosomes and their subsequent degradation. RqcH recruits Ala-charged tRNA, and with RqcP directs the elongation of stalled nascent chains on 50S ribosomal subunits, leading to non-templated C-terminal alanine extensions (Ala tail). The Ala tail promotes nascent chain degradation. RqcP is associated with the translocation-like movement of the peptidyl-tRNA from the A-site into the P-site. The protein is RQC P-site tRNA stabilizing factor of Listeria monocytogenes serovar 1/2a (strain ATCC BAA-679 / EGD-e).